The sequence spans 385 residues: 8-amino-7-oxononanoate synthase (385 aa).

Residue R21 coordinates substrate. Residue 108–109 (GF) participates in pyridoxal 5'-phosphate binding. H133 provides a ligand contact to substrate. Pyridoxal 5'-phosphate-binding residues include S179, H207, and T233. K236 carries the post-translational modification N6-(pyridoxal phosphate)lysine. T352 lines the substrate pocket.

The protein belongs to the class-II pyridoxal-phosphate-dependent aminotransferase family. BioF subfamily. In terms of assembly, homodimer. Requires pyridoxal 5'-phosphate as cofactor.

It carries out the reaction 6-carboxyhexanoyl-[ACP] + L-alanine + H(+) = (8S)-8-amino-7-oxononanoate + holo-[ACP] + CO2. Its pathway is cofactor biosynthesis; biotin biosynthesis. Catalyzes the decarboxylative condensation of pimeloyl-[acyl-carrier protein] and L-alanine to produce 8-amino-7-oxononanoate (AON), [acyl-carrier protein], and carbon dioxide. The polypeptide is 8-amino-7-oxononanoate synthase (Klebsiella pneumoniae (strain 342)).